The following is a 417-amino-acid chain: Tyrosine--tRNA ligase (417 aa).

Tyrosine 39 contributes to the L-tyrosine binding site. The 'HIGH' region signature appears at 44–53 (PTAPSLHAGG). Tyrosine 176 and glutamine 180 together coordinate L-tyrosine. The 'KMSKS' region signature appears at 236–240 (KMGKS). Lysine 239 provides a ligand contact to ATP. The S4 RNA-binding domain occupies 350-417 (IGVLALMVLA…KKRHVLIRPA (68 aa)).

This sequence belongs to the class-I aminoacyl-tRNA synthetase family. TyrS type 1 subfamily. In terms of assembly, homodimer.

The protein localises to the cytoplasm. It carries out the reaction tRNA(Tyr) + L-tyrosine + ATP = L-tyrosyl-tRNA(Tyr) + AMP + diphosphate + H(+). Functionally, catalyzes the attachment of tyrosine to tRNA(Tyr) in a two-step reaction: tyrosine is first activated by ATP to form Tyr-AMP and then transferred to the acceptor end of tRNA(Tyr). This chain is Tyrosine--tRNA ligase, found in Brucella abortus (strain 2308).